A 208-amino-acid polypeptide reads, in one-letter code: MADLSAQDKLKQICDALREETLKPAEEEAGSIVHNAREQAKRIVEEAKEEAQRIIRSAEETADQTLKKGEAALVQAGKRSLENLKQAVETKIFRESLGEWLDHVATDPEVSAKLVQALVQAVDAQGISGNLSAYIGKHVSARAVNEALGKEITSKLKEKGVSVGKFSGGAQLKVEERNWVLDMSSEVLLDLLTRFLQKDFREMIFQSC.

Belongs to the V-ATPase E subunit family.

Produces ATP from ADP in the presence of a proton gradient across the membrane. In Chlamydia trachomatis serovar L2 (strain ATCC VR-902B / DSM 19102 / 434/Bu), this protein is V-type proton ATPase subunit E.